The chain runs to 366 residues: uncharacterized protein (366 aa).

6 consecutive transmembrane segments (helical) span residues 30-50 (FWTY…AVGI), 66-86 (IIIA…IIVI), 136-156 (IFIS…GYLA), 162-182 (IILF…LDLL), 198-218 (IGVV…IYDI), and 225-245 (YIPE…IIDV).

It is found in the cell membrane. This is an uncharacterized protein from Methanocaldococcus jannaschii (strain ATCC 43067 / DSM 2661 / JAL-1 / JCM 10045 / NBRC 100440) (Methanococcus jannaschii).